A 164-amino-acid polypeptide reads, in one-letter code: Large ribosomal subunit protein bL19 (164 aa).

The disordered stretch occupies residues 144–164; the sequence is EAEKQTEVQAEPKIEKSEEKK.

It belongs to the bacterial ribosomal protein bL19 family.

This protein is located at the 30S-50S ribosomal subunit interface and may play a role in the structure and function of the aminoacyl-tRNA binding site. This chain is Large ribosomal subunit protein bL19, found in Pelagibacter ubique (strain HTCC1062).